The primary structure comprises 158 residues: Interleukin-17A (158 aa).

The N-terminal stretch at 1-25 (MSPGRASSVSLMLLLLLSLAATVKA) is a signal peptide. The N-linked (GlcNAc...) asparagine glycan is linked to Asn-71. Intrachain disulfides connect Cys-97-Cys-147 and Cys-102-Cys-149.

This sequence belongs to the IL-17 family. As to quaternary structure, homodimer. Forms complexes with IL17RA and IL17RC receptors with 2:1 binding stoichiometry: two receptor chains for one interleukin molecule. IL17A homodimer preferentially drives the formation of IL17RA-IL17RC heterodimeric receptor complex. IL17A homodimer adopts an asymmetrical ternary structure with one IL17RA molecule, allowing for high affinity interactions of one IL17A monomer with one IL17RA molecule (via D1 and D2 domains), while disfavoring binding of a second IL17RA molecule on the other IL17A monomer. Heterodimer with IL17F. IL17A-IL17F forms complexes with IL17RA-IL17RC, but with lower affinity when compared to IL17A homodimer. IL17RA and IL17RC chains cannot distinguish between IL17A and IL17F molecules, potentially enabling the formation of topologically distinct complexes. Expressed by Th17 cell lineage (at protein level). The expression pattern reflects the differentiation state, with IL17A-IL17F heterodimers produced at higher levels than IL17A-IL17A and IL17F-IL17F dimers in fully differentiated Th17 cells. Expressed in innate lymphoid cells (at protein level). Expressed in gamma-delta T cell subsets (at protein level). Expressed in iNKT cells (at protein level).

The protein localises to the secreted. Effector cytokine of innate and adaptive immune system involved in antimicrobial host defense and maintenance of tissue integrity. Signals via IL17RA-IL17RC heterodimeric receptor complex, triggering homotypic interaction of IL17RA and IL17RC chains with TRAF3IP2 adapter. This leads to downstream TRAF6-mediated activation of NF-kappa-B and MAPkinase pathways ultimately resulting in transcriptional activation of cytokines, chemokines, antimicrobial peptides and matrix metalloproteinases, with potential strong immune inflammation. Plays an important role in connecting T cell-mediated adaptive immunity and acute inflammatory response to destroy extracellular bacteria and fungi. As a signature effector cytokine of T-helper 17 cells (Th17), primarily induces neutrophil activation and recruitment at infection and inflammatory sites. In airway epithelium, mediates neutrophil chemotaxis via induction of CXCL1 and CXCL5 chemokines. In secondary lymphoid organs, contributes to germinal center formation by regulating the chemotactic response of B cells to CXCL12 and CXCL13, enhancing retention of B cells within the germinal centers, B cell somatic hypermutation rate and selection toward plasma cells. Effector cytokine of a subset of gamma-delta T cells that functions as part of an inflammatory circuit downstream IL1B, TLR2 and IL23A-IL12B to promote neutrophil recruitment for efficient bacterial clearance. Effector cytokine of innate immune cells including invariant natural killer cell (iNKT) and group 3 innate lymphoid cells that mediate initial neutrophilic inflammation. Involved in the maintenance of the integrity of epithelial barriers during homeostasis and pathogen infection. Upon acute injury, has a direct role in epithelial barrier formation by regulating OCLN localization and tight junction biogenesis. As part of the mucosal immune response induced by commensal bacteria, enhances host's ability to resist pathogenic bacterial and fungal infections by promoting neutrophil recruitment and antimicrobial peptides release. In synergy with IL17F, mediates the production of antimicrobial beta-defensins DEFB1, DEFB103A, and DEFB104A by mucosal epithelial cells, limiting the entry of microbes through the epithelial barriers. Involved in antiviral host defense through various mechanisms. Enhances immunity against West Nile virus by promoting T cell cytotoxicity. May play a beneficial role in influenza A virus (H5N1) infection by enhancing B cell recruitment and immune response in the lung. Contributes to influenza A virus (H1N1) clearance by driving the differentiation of B-1a B cells, providing for production of virus-specific IgM antibodies at first line of host defense. The polypeptide is Interleukin-17A (Il17a) (Mus musculus (Mouse)).